We begin with the raw amino-acid sequence, 429 residues long: Serine--tRNA ligase (429 aa).

235–237 (TAE) contacts L-serine. Position 266–268 (266–268 (RSE)) interacts with ATP. Glu-289 is a binding site for L-serine. Residue 353–356 (EISS) coordinates ATP. Position 389 (Ser-389) interacts with L-serine.

This sequence belongs to the class-II aminoacyl-tRNA synthetase family. Type-1 seryl-tRNA synthetase subfamily. In terms of assembly, homodimer. The tRNA molecule binds across the dimer.

The protein resides in the cytoplasm. It catalyses the reaction tRNA(Ser) + L-serine + ATP = L-seryl-tRNA(Ser) + AMP + diphosphate + H(+). The enzyme catalyses tRNA(Sec) + L-serine + ATP = L-seryl-tRNA(Sec) + AMP + diphosphate + H(+). Its pathway is aminoacyl-tRNA biosynthesis; selenocysteinyl-tRNA(Sec) biosynthesis; L-seryl-tRNA(Sec) from L-serine and tRNA(Sec): step 1/1. In terms of biological role, catalyzes the attachment of serine to tRNA(Ser). Is also able to aminoacylate tRNA(Sec) with serine, to form the misacylated tRNA L-seryl-tRNA(Sec), which will be further converted into selenocysteinyl-tRNA(Sec). This chain is Serine--tRNA ligase, found in Histophilus somni (strain 2336) (Haemophilus somnus).